Consider the following 48-residue polypeptide: MLSTESWDNCEKPPLLFPFTALTCDETPVFSGSVLNLVAHSVDKYGIG.

This is Protein YgdT (ygdT) from Escherichia coli (strain K12).